We begin with the raw amino-acid sequence, 490 residues long: Serine/threonine-protein kinase BSK6 (490 aa).

Residue glycine 2 is the site of N-myristoyl glycine attachment. Serine 25 carries the post-translational modification Phosphoserine. Positions 56-310 (DNIVSEHGEK…KSLVTSLVTL (255 aa)) constitute a Protein kinase domain. Residues 62–70 (HGEKAPNVV) and lysine 84 contribute to the ATP site. Residue aspartate 178 is the Proton acceptor of the active site. Serine 373 carries the phosphoserine modification.

This sequence belongs to the protein kinase superfamily. Ser/Thr protein kinase family. As to quaternary structure, interacts with BRI1, ASK7/BIN2, ASK9/BIL2, BSK1, BSK5, BSK8 and BSK11. Post-translationally, phosphorylated by BRI1, ASK7/BIN2 and ASK9/BIL2.

The protein resides in the cell membrane. The catalysed reaction is L-seryl-[protein] + ATP = O-phospho-L-seryl-[protein] + ADP + H(+). It carries out the reaction L-threonyl-[protein] + ATP = O-phospho-L-threonyl-[protein] + ADP + H(+). In terms of biological role, probable serine/threonine kinase that acts as a positive regulator of brassinosteroid (BR) signaling downstream of the receptor kinase BRI1. Functions redundantly with BSK3, BSK4, BSK7 and BSK8. This chain is Serine/threonine-protein kinase BSK6, found in Arabidopsis thaliana (Mouse-ear cress).